We begin with the raw amino-acid sequence, 114 residues long: Iron-sulfur cluster insertion protein ErpA (114 aa).

Iron-sulfur cluster is bound by residues cysteine 42, cysteine 106, and cysteine 108.

It belongs to the HesB/IscA family. In terms of assembly, homodimer. Iron-sulfur cluster is required as a cofactor.

Its function is as follows. Required for insertion of 4Fe-4S clusters for at least IspG. This chain is Iron-sulfur cluster insertion protein ErpA, found in Enterobacter sp. (strain 638).